The sequence spans 396 residues: Chaperone protein DnaJ (396 aa).

The 66-residue stretch at 6-71 (DYYEVLEVTK…DKRSRYDQFG (66 aa)) folds into the J domain. The CR-type zinc finger occupies 154-236 (GVEKKFKLKK…CGGDGIVYGE (83 aa)). Zn(2+) is bound by residues Cys167, Cys170, Cys184, Cys187, Cys210, Cys213, Cys224, and Cys227. CXXCXGXG motif repeat units follow at residues 167–174 (CNHCHGTG), 184–191 (CPTCKGSG), 210–217 (CPTCNGEG), and 224–231 (CKECGGDG).

Belongs to the DnaJ family. As to quaternary structure, homodimer. The cofactor is Zn(2+).

It is found in the cytoplasm. Functionally, participates actively in the response to hyperosmotic and heat shock by preventing the aggregation of stress-denatured proteins and by disaggregating proteins, also in an autonomous, DnaK-independent fashion. Unfolded proteins bind initially to DnaJ; upon interaction with the DnaJ-bound protein, DnaK hydrolyzes its bound ATP, resulting in the formation of a stable complex. GrpE releases ADP from DnaK; ATP binding to DnaK triggers the release of the substrate protein, thus completing the reaction cycle. Several rounds of ATP-dependent interactions between DnaJ, DnaK and GrpE are required for fully efficient folding. Also involved, together with DnaK and GrpE, in the DNA replication of plasmids through activation of initiation proteins. This is Chaperone protein DnaJ from Bacteroides thetaiotaomicron (strain ATCC 29148 / DSM 2079 / JCM 5827 / CCUG 10774 / NCTC 10582 / VPI-5482 / E50).